The primary structure comprises 274 residues: uncharacterized protein (274 aa).

The signal sequence occupies residues 1–21 (MRKLTLLPLLLIITGLLTVQA). A helical membrane pass occupies residues 249-266 (TSAFVILTASALIFIYLF).

It localises to the membrane. This is an uncharacterized protein from Archaeoglobus fulgidus (strain ATCC 49558 / DSM 4304 / JCM 9628 / NBRC 100126 / VC-16).